Here is a 95-residue protein sequence, read N- to C-terminus: Cystatin-A2 (95 aa).

A Secondary area of contact motif is present at residues Gln47–Gly51.

This sequence belongs to the cystatin family.

The protein resides in the cytoplasm. Intracellular thiol proteinase inhibitor. Inhibits cathepsin B, but not papain. The protein is Cystatin-A2 (cpiB) of Dictyostelium discoideum (Social amoeba).